A 95-amino-acid chain; its full sequence is Aspartyl/glutamyl-tRNA(Asn/Gln) amidotransferase subunit C (95 aa).

The protein belongs to the GatC family. As to quaternary structure, heterotrimer of A, B and C subunits.

The enzyme catalyses L-glutamyl-tRNA(Gln) + L-glutamine + ATP + H2O = L-glutaminyl-tRNA(Gln) + L-glutamate + ADP + phosphate + H(+). It catalyses the reaction L-aspartyl-tRNA(Asn) + L-glutamine + ATP + H2O = L-asparaginyl-tRNA(Asn) + L-glutamate + ADP + phosphate + 2 H(+). Allows the formation of correctly charged Asn-tRNA(Asn) or Gln-tRNA(Gln) through the transamidation of misacylated Asp-tRNA(Asn) or Glu-tRNA(Gln) in organisms which lack either or both of asparaginyl-tRNA or glutaminyl-tRNA synthetases. The reaction takes place in the presence of glutamine and ATP through an activated phospho-Asp-tRNA(Asn) or phospho-Glu-tRNA(Gln). In Clostridium botulinum (strain Loch Maree / Type A3), this protein is Aspartyl/glutamyl-tRNA(Asn/Gln) amidotransferase subunit C.